Consider the following 470-residue polypeptide: UDP-glycosyltransferase 75C1 (470 aa).

H16 functions as the Proton acceptor in the catalytic mechanism. H16 contacts an anthocyanidin. 8 residues coordinate UDP-alpha-D-glucose: Q347, H362, W365, N366, S367, E370, D386, and Q387.

This sequence belongs to the UDP-glycosyltransferase family. As to expression, expressed in flowers and fruits, especially in pulp, and, at lower levels, in seeds.

It is found in the cytoplasm. Its subcellular location is the nucleus. The catalysed reaction is 2-cis-(+)-abscisate + UDP-alpha-D-glucose = beta-D-glucopyranosyl cis-(+)-abscisate + UDP. It catalyses the reaction (indol-3-yl)acetate + UDP-alpha-D-glucose = 1-O-(indol-3-ylacetyl)-beta-D-glucose + UDP. In terms of biological role, glucosyltransferase acting on both abscisic acid (ABA) and auxin (IAA). Required for ABA-mediated fruit ripening, seed germination, and negative responses to drought. This chain is UDP-glycosyltransferase 75C1, found in Solanum lycopersicum (Tomato).